Consider the following 379-residue polypeptide: Armadillo repeat-containing X-linked protein 3 (379 aa).

At 1–6 the chain is on the mitochondrial intermembrane side; sequence MGYARK. 2 mitochondrion outer membrane (MOM)-targeting sequence regions span residues 1–6 and 26–37; these read MGYARK and RLTRGRKQNKEK. The helical; Signal-anchor transmembrane segment at 7–29 threads the bilayer; the sequence is VGWVTAGLVIGAGACYCIYRLTR. At 30 to 379 the chain is on the cytoplasmic side; that stretch reads GRKQNKEKMA…AEHMFPKSQE (350 aa). A phosphoserine mark is found at Ser61, Ser67, and Ser72. The interval 89–98 is nuclear localization signal; the sequence is RARARARARA. The segment covering 95–106 has biased composition (basic residues); that stretch reads RARATRARRAVQ. Positions 95–116 are disordered; that stretch reads RARATRARRAVQKRASPNSDDT. Ser110 bears the Phosphoserine mark. 3 ARM repeats span residues 111-151, 153-192, and 233-272; these read PNSD…NNAA, AFNRDIIRDLGGLPIVAKILNTRDPIVKEKALIVLNNLSV, and VTNEYQHMLANSISDFFRLFSAGNEETKLQVLKLLLNLAE.

Belongs to the eutherian X-chromosome-specific Armcx family. In terms of assembly, interacts (via ARM domain) with MIRO1, MIRO2 and TRAK2. The interaction with Miro is calcium-dependent. Interacts with SOX10.

The protein resides in the mitochondrion outer membrane. Its subcellular location is the cytoplasm. It localises to the nucleus. In terms of biological role, regulates mitochondrial aggregation and transport in axons in living neurons. May link mitochondria to the TRAK2-kinesin motor complex via its interaction with Miro and TRAK2. Mitochondrial distribution and dynamics is regulated through ARMCX3 protein degradation, which is promoted by PCK and negatively regulated by WNT1. Enhances the SOX10-mediated transactivation of the neuronal acetylcholine receptor subunit alpha-3 and beta-4 subunit gene promoters. In Homo sapiens (Human), this protein is Armadillo repeat-containing X-linked protein 3 (ARMCX3).